Consider the following 515-residue polypeptide: MIILKKQHDTIIVLDFGSQYNQLIARRIREFGVYSELHPHTITAEEIKAMNPKGIIFSGGPNSVYGEGALHCDEKIFDLGLPIFGICYGMQLMTQQFGGTVERANHREYGKAVLKVENESKLYANLPEEQVVWMSHGDLVTGLPEGFVVDATSESCPIAGMSNEAKNLYGVQFHPEVRHSEHGNDLIKNFVFGVCGCSEGWNMENFIEVELEKIRETVGDKKVLCALSGGVDSSVVAVLIHKAIGDQLTCIFVDHGLLRKGEAEGVMKTFSEGFHMNVIKVDAKERFMNKLKGVEDPEQKRKIIGNEFIYVFDDEASKLEGMDFLAQGTLYTDIVESGTATAQTIKSHHNVGGLPEDMQFKLIEPLNTLFKDEVRVLGSELGIPDEIVWRQPFPGPGLGIRVLGEITEEKLEIVRESDAILREEIIKAGLDREIWQYFTALPGMRSVGVMGDERTYDYTVGIRAVTSIDGMTADWARIPWDVLEKISVRIVNEVKHVNRIVYDVTSKPPATIEWE.

Positions 10-200 (TIIVLDFGSQ…VFGVCGCSEG (191 aa)) constitute a Glutamine amidotransferase type-1 domain. C87 (nucleophile) is an active-site residue. Catalysis depends on residues H174 and E176. In terms of domain architecture, GMPS ATP-PPase spans 201–390 (WNMENFIEVE…LGIPDEIVWR (190 aa)). 228–234 (SGGVDSS) is a binding site for ATP.

Homodimer.

It catalyses the reaction XMP + L-glutamine + ATP + H2O = GMP + L-glutamate + AMP + diphosphate + 2 H(+). It participates in purine metabolism; GMP biosynthesis; GMP from XMP (L-Gln route): step 1/1. In terms of biological role, catalyzes the synthesis of GMP from XMP. This Bacillus anthracis (strain A0248) protein is GMP synthase [glutamine-hydrolyzing].